Consider the following 190-residue polypeptide: Protein GrpE (190 aa).

Over residues 1–31 the composition is skewed to basic and acidic residues; sequence MTEEQKKYEDAENLESKSENPEEASAEKSEN. Positions 1 to 39 are disordered; it reads MTEEQKKYEDAENLESKSENPEEASAEKSENGVEDLQAE.

Belongs to the GrpE family. In terms of assembly, homodimer.

Its subcellular location is the cytoplasm. Participates actively in the response to hyperosmotic and heat shock by preventing the aggregation of stress-denatured proteins, in association with DnaK and GrpE. It is the nucleotide exchange factor for DnaK and may function as a thermosensor. Unfolded proteins bind initially to DnaJ; upon interaction with the DnaJ-bound protein, DnaK hydrolyzes its bound ATP, resulting in the formation of a stable complex. GrpE releases ADP from DnaK; ATP binding to DnaK triggers the release of the substrate protein, thus completing the reaction cycle. Several rounds of ATP-dependent interactions between DnaJ, DnaK and GrpE are required for fully efficient folding. The polypeptide is Protein GrpE (Zymomonas mobilis subsp. mobilis (strain ATCC 31821 / ZM4 / CP4)).